The chain runs to 188 residues: Segregation and condensation protein B (188 aa).

Belongs to the ScpB family. Homodimer. Homodimerization may be required to stabilize the binding of ScpA to the Smc head domains. Component of a cohesin-like complex composed of ScpA, ScpB and the Smc homodimer, in which ScpA and ScpB bind to the head domain of Smc. The presence of the three proteins is required for the association of the complex with DNA.

Its subcellular location is the cytoplasm. In terms of biological role, participates in chromosomal partition during cell division. May act via the formation of a condensin-like complex containing Smc and ScpA that pull DNA away from mid-cell into both cell halves. This Lactococcus lactis subsp. cremoris (strain MG1363) protein is Segregation and condensation protein B.